The chain runs to 629 residues: Serine/threonine-protein kinase ICK (629 aa).

Residues 4 to 284 enclose the Protein kinase domain; it reads YTTIKQLGDG…ASQALRYPYF (281 aa). ATP contacts are provided by residues 10 to 18 and lysine 33; that span reads LGDGTYGSV. The Proton acceptor role is filled by aspartate 125. Threonine 157 bears the Phosphothreonine; by CDK7 mark. Tyrosine 159 is modified (phosphotyrosine). Serine 161 bears the Phosphoserine mark. Disordered stretches follow at residues 292 to 376, 455 to 483, and 581 to 629; these read IISK…SLHN, SESV…SSAK, and SSLK…PSRR. The segment covering 296–306 has biased composition (basic and acidic residues); it reads DSGKPQREVQD. Positions 309 to 321 are enriched in pro residues; it reads GPPPYIKPAPPAQ. Composition is skewed to low complexity over residues 322–344 and 457–470; these read APAK…PQHS and SVGT…QASS.

Belongs to the protein kinase superfamily. CMGC Ser/Thr protein kinase family. CDC2/CDKX subfamily. The cofactor is Mg(2+). Autophosphorylated on serine and threonine residues. Phosphorylation at Thr-157 by CDK7/Cak1p increases kinase activity. In terms of tissue distribution, highly expressed in colon and lung, lower levels present in heart, esophagus, stomach, small intestine and ovary. Localizes to the crypt region of large and small intestine.

The protein localises to the cytoplasm. It is found in the cytosol. It localises to the cell projection. Its subcellular location is the cilium. The protein resides in the nucleus. The protein localises to the cytoskeleton. It is found in the cilium basal body. It carries out the reaction L-seryl-[protein] + ATP = O-phospho-L-seryl-[protein] + ADP + H(+). It catalyses the reaction L-threonyl-[protein] + ATP = O-phospho-L-threonyl-[protein] + ADP + H(+). Functionally, has an essential role in ciliogenesis, particularly in neuronal and retinal progenitor cells. Phosphorylates KIF3A. Involved in the control of ciliary length. Regulates the ciliary localization of SHH pathway components as well as the localization of IFT components at ciliary tips. May play a role in cardiac development. Regulates intraflagellar transport (IFT) speed and negatively regulates cilium length in a cAMP and mTORC1 signaling -dependent manner and this regulation requires its kinase activity. This is Serine/threonine-protein kinase ICK (Cilk1) from Mus musculus (Mouse).